We begin with the raw amino-acid sequence, 251 residues long: Triosephosphate isomerase (251 aa).

A substrate-binding site is contributed by 9-11; sequence NWK. The Electrophile role is filled by His-95. Glu-167 acts as the Proton acceptor in catalysis. Substrate contacts are provided by residues Gly-173, Ser-212, and 233 to 234; that span reads GG.

The protein belongs to the triosephosphate isomerase family. Homodimer.

The protein localises to the cytoplasm. It carries out the reaction D-glyceraldehyde 3-phosphate = dihydroxyacetone phosphate. It functions in the pathway carbohydrate biosynthesis; gluconeogenesis. It participates in carbohydrate degradation; glycolysis; D-glyceraldehyde 3-phosphate from glycerone phosphate: step 1/1. Its function is as follows. Involved in the gluconeogenesis. Catalyzes stereospecifically the conversion of dihydroxyacetone phosphate (DHAP) to D-glyceraldehyde-3-phosphate (G3P). This Pseudomonas savastanoi pv. phaseolicola (strain 1448A / Race 6) (Pseudomonas syringae pv. phaseolicola (strain 1448A / Race 6)) protein is Triosephosphate isomerase.